The primary structure comprises 89 residues: Small ribosomal subunit protein bS20 (89 aa).

Belongs to the bacterial ribosomal protein bS20 family.

In terms of biological role, binds directly to 16S ribosomal RNA. This Hahella chejuensis (strain KCTC 2396) protein is Small ribosomal subunit protein bS20.